The following is a 188-amino-acid chain: MGIDIRHNKDRKVRRKEPKSQDIYLRLLVKLYRFLARRTNSSFNRVVLKRLFMSRTNRPPLSMSRLIRKMKLPRRENKTAVVVGCITADVRIHDIPKLTVCALKLTSGARSRILKAGGQIMTFDQLALAAPKGQNTVLLSGPRKAREVYRHFGKAPSTPHSRTKPYVLSKGRKFERARGRRASRGYKN.

A disordered region spans residues 153-188 (GKAPSTPHSRTKPYVLSKGRKFERARGRRASRGYKN). The segment covering 178 to 188 (RGRRASRGYKN) has biased composition (basic residues).

This sequence belongs to the eukaryotic ribosomal protein eL18 family. Component of the large ribosomal subunit.

It is found in the cytoplasm. Its function is as follows. Component of the large ribosomal subunit. The ribosome is a large ribonucleoprotein complex responsible for the synthesis of proteins in the cell. This Xenopus laevis (African clawed frog) protein is Large ribosomal subunit protein eL18A (rpl18-a).